The sequence spans 133 residues: Glutaredoxin-C4, chloroplastic (133 aa).

Residues 1–13 (MGMAQSSSSSSRP) are compositionally biased toward low complexity. The segment at 1 to 25 (MGMAQSSSSSSRPSDSEQLEEPSKP) is disordered. The N-terminal 27 residues, 1-27 (MGMAQSSSSSSRPSDSEQLEEPSKPVM), are a transit peptide targeting the chloroplast. The Glutaredoxin domain occupies 29-129 (LDKAKEIVAS…PLLTEAGAIA (101 aa)). A disulfide bridge links cysteine 49 with cysteine 52.

It belongs to the glutaredoxin family. CPYC subfamily.

It is found in the plastid. The protein resides in the chloroplast. In terms of biological role, has a glutathione-disulfide oxidoreductase activity in the presence of NADPH and glutathione reductase. Reduces low molecular weight disulfides and proteins. This is Glutaredoxin-C4, chloroplastic (GRXC4) from Oryza sativa subsp. japonica (Rice).